Here is a 326-residue protein sequence, read N- to C-terminus: Delta-aminolevulinic acid dehydratase (326 aa).

Zn(2+)-binding residues include cysteine 125, cysteine 127, and cysteine 135. Residue lysine 200 is the Schiff-base intermediate with substrate of the active site. 5-aminolevulinate-binding residues include arginine 210 and arginine 222. Glutamate 238 lines the Mg(2+) pocket. Lysine 253 acts as the Schiff-base intermediate with substrate in catalysis. Serine 279 is a binding site for 5-aminolevulinate.

The protein belongs to the ALAD family. As to quaternary structure, homooctamer. The cofactor is Zn(2+).

It carries out the reaction 2 5-aminolevulinate = porphobilinogen + 2 H2O + H(+). The protein operates within porphyrin-containing compound metabolism; protoporphyrin-IX biosynthesis; coproporphyrinogen-III from 5-aminolevulinate: step 1/4. Functionally, catalyzes an early step in the biosynthesis of tetrapyrroles. Binds two molecules of 5-aminolevulinate per subunit, each at a distinct site, and catalyzes their condensation to form porphobilinogen. This is Delta-aminolevulinic acid dehydratase (hemB) from Methanothermobacter thermautotrophicus (strain ATCC 29096 / DSM 1053 / JCM 10044 / NBRC 100330 / Delta H) (Methanobacterium thermoautotrophicum).